An 827-amino-acid chain; its full sequence is Discs large homolog 1-like protein (827 aa).

2 disordered regions span residues 38–61 and 102–133; these read HQDE…TPGP and SPVV…ANPP. The span at 44 to 56 shows a compositional bias: polar residues; it reads GSPQEPSSPQFTD. 3 PDZ domains span residues 159–246, 254–341, and 403–484; these read EITL…RRRK, EIKL…AKPN, and KVVL…QYRP. The 71-residue stretch at 518 to 588 folds into the SH3 domain; the sequence is KRSLYVRALF…PSKRRVEKKE (71 aa). Residues 595 to 618 form a disordered region; the sequence is VKFNSKSREKGDNPDDMLSKGQSG. Residues 637-812 form the Guanylate kinase-like domain; sequence SRPVIILGPM…IYDQVKQIIE (176 aa).

Belongs to the MAGUK family.

It is found in the membrane. In terms of biological role, may play a role in synapse assembly and function. The polypeptide is Discs large homolog 1-like protein (dlg1l) (Danio rerio (Zebrafish)).